The following is a 201-amino-acid chain: Oligoribonuclease (201 aa).

Residues 5–169 enclose the Exonuclease domain; sequence MVWIDCEMTG…ADIRDSITEL (165 aa). Tyrosine 126 is an active-site residue.

The protein belongs to the oligoribonuclease family.

The protein localises to the cytoplasm. Its function is as follows. 3'-to-5' exoribonuclease specific for small oligoribonucleotides. The polypeptide is Oligoribonuclease (Streptomyces griseus).